We begin with the raw amino-acid sequence, 525 residues long: GMP synthase [glutamine-hydrolyzing] (525 aa).

A Glutamine amidotransferase type-1 domain is found at 9 to 207; sequence RILILDFGSQ…VRDICQCEAL (199 aa). Cys86 serves as the catalytic Nucleophile. Catalysis depends on residues His181 and Glu183. The 193-residue stretch at 208-400 folds into the GMPS ATP-PPase domain; that stretch reads WTPAKIIDDA…LGLPYDMLYR (193 aa). 235-241 lines the ATP pocket; that stretch reads SGGVDSS.

Homodimer.

The enzyme catalyses XMP + L-glutamine + ATP + H2O = GMP + L-glutamate + AMP + diphosphate + 2 H(+). The protein operates within purine metabolism; GMP biosynthesis; GMP from XMP (L-Gln route): step 1/1. Catalyzes the synthesis of GMP from XMP. The chain is GMP synthase [glutamine-hydrolyzing] from Salmonella newport (strain SL254).